We begin with the raw amino-acid sequence, 61 residues long: Small ribosomal subunit protein eS31 (61 aa).

The Zn(2+) site is built by Cys-22, Cys-25, Cys-38, and Cys-41. The segment at 22 to 41 (CPRCGSFMAEHKDRYHCGKC) adopts a C4-type zinc-finger fold.

It belongs to the eukaryotic ribosomal protein eS31 family. In terms of assembly, part of the 30S ribosomal subunit. Zn(2+) serves as cofactor.

The chain is Small ribosomal subunit protein eS31 from Nanoarchaeum equitans (strain Kin4-M).